Here is a 250-residue protein sequence, read N- to C-terminus: Small ribosomal subunit protein uS3 (250 aa).

Residues 39-107 (VREFLTKKLK…PAQVSINEID (69 aa)) enclose the KH type-2 domain. Residues 215–250 (MNPAPAEERPAKRGRGRGEGQERRGRRGDRAADKGE) form a disordered region. A compositionally biased stretch (basic and acidic residues) spans 220–250 (AEERPAKRGRGRGEGQERRGRRGDRAADKGE).

Belongs to the universal ribosomal protein uS3 family. Part of the 30S ribosomal subunit. Forms a tight complex with proteins S10 and S14.

Binds the lower part of the 30S subunit head. Binds mRNA in the 70S ribosome, positioning it for translation. This Acinetobacter baumannii (strain AB307-0294) protein is Small ribosomal subunit protein uS3.